Here is a 78-residue protein sequence, read N- to C-terminus: RNA-binding protein Hfq (78 aa).

The 60-residue stretch at 10–69 folds into the Sm domain; that stretch reads DPFLNTLRKEHVPVSIYLVNGIKLQGQIESFDQYVVLLRNTVTQMVYKHAISTVVPARAV.

This sequence belongs to the Hfq family. Homohexamer.

In terms of biological role, RNA chaperone that binds small regulatory RNA (sRNAs) and mRNAs to facilitate mRNA translational regulation in response to envelope stress, environmental stress and changes in metabolite concentrations. Also binds with high specificity to tRNAs. The protein is RNA-binding protein Hfq of Bordetella petrii (strain ATCC BAA-461 / DSM 12804 / CCUG 43448).